The sequence spans 317 residues: NF-kappa-B inhibitor alpha (317 aa).

The interval 1-39 (MFQAAERPQEWAMEGPRDGLKKERLLDDRHDSGLDSMKD) is disordered. Residues 15–39 (GPRDGLKKERLLDDRHDSGLDSMKD) show a composition bias toward basic and acidic residues. Residue lysine 21 forms a Glycyl lysine isopeptide (Lys-Gly) (interchain with G-Cter in SUMO); alternate linkage. A Glycyl lysine isopeptide (Lys-Gly) (interchain with G-Cter in ubiquitin); alternate cross-link involves residue lysine 21. Lysine 22 participates in a covalent cross-link: Glycyl lysine isopeptide (Lys-Gly) (interchain with G-Cter in ubiquitin). Residues 30 to 36 (HDSGLDS) carry the Destruction motif motif. A Phosphoserine; by IKKA and IKKE modification is found at serine 32. Serine 36 is modified (phosphoserine; by IKKA, IKKB, IKKE and TBK1). Tyrosine 42 is subject to Phosphotyrosine; by Tyr-kinases. Residues 45–54 (MVKELQEIRL) carry the Nuclear export signal motif. 5 ANK repeats span residues 73–103 (DGDSFLHLAIIHEEKALTMEVIRQVKGDLAF), 110–139 (LQQTPLHLAVITNQPEIAEALLGAGCDPEL), 143–172 (RGNTPLHLACEQGCLASVGVLTQSCTTPHL), 182–211 (NGHTCLHLASIHGYLGIVELLVSLGADVNA), and 216–245 (NGRTALHLAVDLQNPDLVSLLLKCGADVNR). Positions 110–120 (LQQTPLHLAVI) match the Nuclear import signal motif. A (3S)-3-hydroxyasparagine; by HIF1AN; partial mark is found at asparagine 210 and asparagine 244. A phosphoserine; by CK2 mark is found at serine 283 and serine 288. Threonine 291 carries the phosphothreonine; by CK2 modification. Residue serine 293 is modified to Phosphoserine; by CK2. Threonine 299 bears the Phosphothreonine; by CK2 mark.

This sequence belongs to the NF-kappa-B inhibitor family. Interacts with RELA; the interaction requires the nuclear import signal. Part of a 70-90 kDa complex at least consisting of CHUK, IKBKB, NFKBIA, RELA, ELP1 and MAP3K14. Interacts with NKIRAS1 and NKIRAS2. Interacts with isoform 1 and isoform 2 of RWDD3; the interaction enhances sumoylation. Interacts with PRMT2. Interacts with PRKACA in platelets; this interaction is disrupted by thrombin and collagen. Interacts with MEFV. Interacts with DDRGK1; positively regulates NFKBIA phosphorylation and degradation. Interacts with HNRNPA2B1; the interaction may be mediated by the RRM2 domain of HNRNPA2B1, and HNRNPA2B1 may interact simultaneously with FAM76B and either NFKBIA or NFKBIE to form a complex. As to quaternary structure, (Microbial infection) Interacts with HBV protein X. In terms of processing, phosphorylated at Ser-32 and Ser-36 by IKKA/CHUK and IKKB/IKBKB; disables inhibition of NF-kappa-B DNA-binding activity. Phosphorylation at positions 32 and 36 is prerequisite to recognition by the SCF(FBXW11) and SCF(BTRC) complexes, leading to polyubiquitination and subsequent degradation. Phosphorylated at Ser-32 in response to FK506 treatment: phosphorylation is independent of IKKA/CHUK and IKKB/IKBKB and promotes NFKBIA degradation, followed by NF-kappa-B activation. Phosphorylated at Tyr-42: its effect is however unclear. According to a report, phosphorylation at Tyr-42 activates NF-kappa-B without triggering proteolytic degradation of NFKBIA. According to another publication, phosphorylation at Tyr-42 inhibits NF-kappa-B activity by preventing phosphorylation at Ser-32 and Ser-36 and subsequent ubiquitination and degradation. Post-translationally, polyubiquitinated at Lys-21 and/or Lys-22 following phosphorylation at Ser-32 and Ser-36. Monoubiquitinated at Lys-21 and/or Lys-22 by UBE2D3. Ubiquitin chain elongation is then performed by CDC34 in cooperation with the SCF(FBXW11) E3 ligase complex, building ubiquitin chains from the UBE2D3-primed NFKBIA-linked ubiquitin. The resulting polyubiquitination leads to protein degradation. Also ubiquitinated by the SCF(BTRC) complex following stimulus-dependent phosphorylation at Ser-32 and Ser-36. Deubiquitinated by USP38, leading to NF-kappa-B inhibition. Sumoylated; sumoylation requires the presence of the nuclear import signal. Sumoylation blocks ubiquitination and proteasome-mediated degradation of the protein thereby increasing the protein stability. In terms of processing, hydroxylated by HIF1AN. Post-translationally, (Microbial infection) Deubiquitinated by porcine reproductive and respiratory syndrome virus Nsp2 protein, which thereby interferes with NFKBIA degradation and impairs subsequent NF-kappa-B activation.

Its subcellular location is the cytoplasm. The protein resides in the nucleus. Functionally, inhibits the activity of dimeric NF-kappa-B/REL complexes by trapping REL (RELA/p65 and NFKB1/p50) dimers in the cytoplasm by masking their nuclear localization signals. On cellular stimulation by immune and pro-inflammatory responses, becomes phosphorylated promoting ubiquitination and degradation, enabling the dimeric RELA to translocate to the nucleus and activate transcription. This chain is NF-kappa-B inhibitor alpha (NFKBIA), found in Homo sapiens (Human).